A 336-amino-acid polypeptide reads, in one-letter code: F420-dependent glucose-6-phosphate dehydrogenase (336 aa).

Residue Asp-39 coordinates coenzyme F420-(gamma-Glu)n. The Proton donor role is filled by His-40. Residues Thr-76 and 107 to 108 (TG) contribute to the coenzyme F420-(gamma-Glu)n site. The active-site Proton acceptor is the Glu-109. Coenzyme F420-(gamma-Glu)n is bound by residues Asn-112, 177–178 (GG), and 180–181 (QV). Residues Thr-195, Lys-198, Lys-259, and Arg-283 each coordinate substrate.

Belongs to the F420-dependent glucose-6-phosphate dehydrogenase family. Homodimer.

The catalysed reaction is oxidized coenzyme F420-(gamma-L-Glu)(n) + D-glucose 6-phosphate + H(+) = 6-phospho-D-glucono-1,5-lactone + reduced coenzyme F420-(gamma-L-Glu)(n). Catalyzes the coenzyme F420-dependent oxidation of glucose 6-phosphate (G6P) to 6-phosphogluconolactone. Appears to have a role in resistance to oxidative stress, via its consumption of G6P that serves as a source of reducing power to combat oxidative stress in mycobacteria. This is F420-dependent glucose-6-phosphate dehydrogenase from Mycolicibacterium gilvum (strain PYR-GCK) (Mycobacterium gilvum (strain PYR-GCK)).